The chain runs to 325 residues: Elongation factor P--(R)-beta-lysine ligase (325 aa).

76–78 (SPE) is a binding site for substrate. Residues 100 to 102 (RNE) and N109 contribute to the ATP site. Substrate is bound at residue Y118. 244 to 245 (EL) contacts ATP. Position 251 (E251) interacts with substrate. G300 provides a ligand contact to ATP.

It belongs to the class-II aminoacyl-tRNA synthetase family. EpmA subfamily. As to quaternary structure, homodimer.

The catalysed reaction is D-beta-lysine + L-lysyl-[protein] + ATP = N(6)-((3R)-3,6-diaminohexanoyl)-L-lysyl-[protein] + AMP + diphosphate + H(+). With EpmB is involved in the beta-lysylation step of the post-translational modification of translation elongation factor P (EF-P). Catalyzes the ATP-dependent activation of (R)-beta-lysine produced by EpmB, forming a lysyl-adenylate, from which the beta-lysyl moiety is then transferred to the epsilon-amino group of a conserved specific lysine residue in EF-P. This is Elongation factor P--(R)-beta-lysine ligase from Yersinia enterocolitica serotype O:8 / biotype 1B (strain NCTC 13174 / 8081).